A 224-amino-acid chain; its full sequence is Small ribosomal subunit protein eS1 (224 aa).

The protein belongs to the eukaryotic ribosomal protein eS1 family.

The polypeptide is Small ribosomal subunit protein eS1 (Methanococcus maripaludis (strain C7 / ATCC BAA-1331)).